A 304-amino-acid polypeptide reads, in one-letter code: Mitochondrial glycine transporter (304 aa).

Solcar repeat units lie at residues 3-82 (GKSK…VREA), 106-186 (ENLI…LKVA), and 209-293 (SSAM…LVKR). Transmembrane regions (helical) follow at residues 9-34 (IYAGFTSGLVSAVVLQPFDLLKTRVQ), 57-83 (GTLPSALRMSVGSAMYFTCLNTVREAV), 108-133 (LISGGLVRGTVGLLVMPITVIKVRYE), 161-184 (GWAATFARDAPYAGLYMLFYEQLK), 213-239 (INSVAAATSAGIATTCTNPFDTVKTRM), and 268-286 (GLALRICRKACQAGISWCI).

The protein belongs to the mitochondrial carrier (TC 2.A.29) family. SLC25A38 subfamily.

It localises to the mitochondrion inner membrane. The enzyme catalyses glycine(in) = glycine(out). Its function is as follows. Mitochondrial glycine transporter that imports glycine into the mitochondrial matrix. Plays an important role in providing glycine for the first enzymatic step in heme biosynthesis, the condensation of glycine with succinyl-CoA to produce 5-aminolevulinate (ALA) in the mitochondrial matrix. This chain is Mitochondrial glycine transporter, found in Yarrowia lipolytica (strain CLIB 122 / E 150) (Yeast).